Reading from the N-terminus, the 421-residue chain is 3-phosphoshikimate 1-carboxyvinyltransferase (421 aa).

The 3-phosphoshikimate site is built by Lys-20, Ser-21, and Arg-25. Residue Lys-20 participates in phosphoenolpyruvate binding. Positions 90 and 117 each coordinate phosphoenolpyruvate. Residues Ser-162, Ser-163, Gln-164, Ser-190, Asp-304, and Lys-331 each contribute to the 3-phosphoshikimate site. Gln-164 contributes to the phosphoenolpyruvate binding site. Asp-304 acts as the Proton acceptor in catalysis. Residues Arg-335 and Arg-376 each contribute to the phosphoenolpyruvate site.

It belongs to the EPSP synthase family. As to quaternary structure, monomer.

The protein localises to the cytoplasm. It carries out the reaction 3-phosphoshikimate + phosphoenolpyruvate = 5-O-(1-carboxyvinyl)-3-phosphoshikimate + phosphate. The protein operates within metabolic intermediate biosynthesis; chorismate biosynthesis. Functionally, catalyzes the transfer of the enolpyruvyl moiety of phosphoenolpyruvate (PEP) to the 5-hydroxyl of shikimate-3-phosphate (S3P) to produce enolpyruvyl shikimate-3-phosphate and inorganic phosphate. This is 3-phosphoshikimate 1-carboxyvinyltransferase from Methanothrix thermoacetophila (strain DSM 6194 / JCM 14653 / NBRC 101360 / PT) (Methanosaeta thermophila).